The chain runs to 188 residues: Elongation factor P (188 aa).

Belongs to the elongation factor P family.

It is found in the cytoplasm. The protein operates within protein biosynthesis; polypeptide chain elongation. Functionally, involved in peptide bond synthesis. Stimulates efficient translation and peptide-bond synthesis on native or reconstituted 70S ribosomes in vitro. Probably functions indirectly by altering the affinity of the ribosome for aminoacyl-tRNA, thus increasing their reactivity as acceptors for peptidyl transferase. This is Elongation factor P (efp) from Ureaplasma parvum serovar 3 (strain ATCC 700970).